A 243-amino-acid polypeptide reads, in one-letter code: Variant surface antigen E (243 aa).

An N-terminal signal peptide occupies residues 1 to 29; it reads MKKSIFSKKLLVSFGSLVTLAAIPLIAIS. Residue C30 is the site of N-palmitoyl cysteine attachment. A lipid anchor (S-diacylglycerol cysteine) is attached at C30. Positions 34-243 are disordered; the sequence is TDNLSQSQQP…TTSDGQNQNK (210 aa). The segment covering 52 to 92 has biased composition (low complexity); that stretch reads GTNTENGSNNGSGSGTTNSSGGTNQSGSASGNGSSNSSVST. The span at 93–243 shows a compositional bias: polar residues; sequence PDGQHSNPSN…TTSDGQNQNK (151 aa). 11 tandem repeats follow at residues 97-109, 110-122, 123-135, 136-148, 149-161, 162-174, 175-187, 188-200, 201-213, 214-226, and 227-239. An 11 X 13 AA tandem repeats region spans residues 97 to 239; the sequence is HSNPSNPTTS…PSNPTTSDGQ (143 aa).

It is found in the cell membrane. Functionally, responsible for the antigenic diversity for host adaptation. Expression in E.coli of a construct containing vlpD, vlpE, and vlpF yields antigenically distinguishable products corresponding to each gene. The chain is Variant surface antigen E (vlpE) from Mesomycoplasma hyorhinis (Mycoplasma hyorhinis).